We begin with the raw amino-acid sequence, 336 residues long: Fructose-1,6-bisphosphatase class 1 (336 aa).

4 residues coordinate Mg(2+): Glu92, Asp115, Leu117, and Asp118. Residues 118–121, Asn211, Tyr244, 262–264, and Lys274 contribute to the substrate site; these read DGSS and YLY. Glu280 is a binding site for Mg(2+).

The protein belongs to the FBPase class 1 family. Homotetramer. Mg(2+) is required as a cofactor.

Its subcellular location is the cytoplasm. The enzyme catalyses beta-D-fructose 1,6-bisphosphate + H2O = beta-D-fructose 6-phosphate + phosphate. Its pathway is carbohydrate biosynthesis; gluconeogenesis. The chain is Fructose-1,6-bisphosphatase class 1 from Vibrio cholerae serotype O1 (strain ATCC 39315 / El Tor Inaba N16961).